The sequence spans 372 residues: ATP-sensitive inward rectifier potassium channel 1 (372 aa).

The Cytoplasmic segment spans residues 1 to 58; the sequence is MFKHLRRWFVTHIFGRSRQRARLVSKDGRCNIEFGNVDAQSRFIFFVDIWTTVLDLKW. Position 25 is a phosphoserine; by SGK1 (S25). Residues 59–83 form a helical membrane-spanning segment; that stretch reads RYKMTVFITAFLGSWFLFGLLWYVV. Residues 84–108 lie on the Extracellular side of the membrane; the sequence is AYVHKDLPEFYPPDNRTPCVENING. An N-linked (GlcNAc...) asparagine glycan is attached at N98. The helical; Pore-forming intramembrane region spans 109–120; that stretch reads MTSAFLFSLETQ. Positions 121–127 form an intramembrane region, pore-forming; sequence VTIGYGF. The Selectivity filter signature appears at 122–127; it reads TIGYGF. At 128-136 the chain is on the extracellular side; the sequence is RFVTEQCAT. Residues 137-158 form a helical membrane-spanning segment; it reads AIFLLIFQSILGVIINSFMCGA. The Cytoplasmic portion of the chain corresponds to 159 to 372; it reads ILAKISRPKK…EVDETDDTQM (214 aa). The polyphosphoinositide (PIP2)-binding stretch occupies residues 161 to 188; that stretch reads AKISRPKKRAKTITFSKNAVISKRGGKL. 204 to 211 is a binding site for ATP; that stretch reads GSHIYGKL.

It belongs to the inward rectifier-type potassium channel (TC 1.A.2.1) family. KCNJ1 subfamily. In terms of assembly, interacts with SGK1 and SLC9A3R2/NHERF2. Phosphorylation at Ser-25 by SGK1 is necessary for its expression at the cell membrane.

It is found in the cell membrane. It catalyses the reaction K(+)(in) = K(+)(out). Inhibited by WNK3. Activated by phosphatidylinositol 4,5 biphosphate (PtdIns(4,5)P2). Functionally, inward rectifier potassium channels are characterized by a greater tendency to allow potassium to flow into the cell rather than out of it. Their voltage dependence is regulated by the concentration of extracellular potassium; as external potassium is raised, the voltage range of the channel opening shifts to more positive voltages. The inward rectification is mainly due to the blockage of outward current by internal magnesium. This channel is activated by internal ATP and can be blocked by external barium. In the kidney, probably plays a major role in potassium homeostasis. The sequence is that of ATP-sensitive inward rectifier potassium channel 1 (Kcnj1) from Mus musculus (Mouse).